Reading from the N-terminus, the 39-residue chain is Photosystem II reaction center protein J (39 aa).

A helical transmembrane segment spans residues 7 to 27 (IPLWVVAVIAGLGVIAVVGLF).

Belongs to the PsbJ family. In terms of assembly, PSII is composed of 1 copy each of membrane proteins PsbA, PsbB, PsbC, PsbD, PsbE, PsbF, PsbH, PsbI, PsbJ, PsbK, PsbL, PsbM, PsbT, PsbX, PsbY, PsbZ, Psb30/Ycf12, peripheral proteins PsbO, CyanoQ (PsbQ), PsbU, PsbV and a large number of cofactors. It forms dimeric complexes.

The protein resides in the cellular thylakoid membrane. Its function is as follows. One of the components of the core complex of photosystem II (PSII). PSII is a light-driven water:plastoquinone oxidoreductase that uses light energy to abstract electrons from H(2)O, generating O(2) and a proton gradient subsequently used for ATP formation. It consists of a core antenna complex that captures photons, and an electron transfer chain that converts photonic excitation into a charge separation. This is Photosystem II reaction center protein J from Gloeothece citriformis (strain PCC 7424) (Cyanothece sp. (strain PCC 7424)).